The sequence spans 184 residues: MNIKSEFFRVDFIIGARRLSNYFWATVVFLGSLGFFIVGVSSYLQKNIVFFLSASDILFTPQGIVMCFYGIAGLFLSFYLWFTIFLDIGSGYNEFDKKKGIISIFRWGYPGQNRRIKLSFPIKDVQAIKLEVKEVLPARRMIYIKIKGQQDIPLNRIAENITLREMEDKAADLARFLKVSIEGL.

The next 2 membrane-spanning stretches (helical) occupy residues 21-43 (NYFWATVVFLGSLGFFIVGVSSY) and 63-85 (GIVMCFYGIAGLFLSFYLWFTIF).

The protein belongs to the Ycf4 family.

It localises to the plastid. It is found in the chloroplast thylakoid membrane. Its function is as follows. Seems to be required for the assembly of the photosystem I complex. This chain is Photosystem I assembly protein Ycf4, found in Chaetosphaeridium globosum (Charophycean green alga).